The chain runs to 411 residues: MQCSWKAVLLLALASIAIQYTAIRTFTAKSFHTCPGLAEAGLAERLCEESPTFAYNLSRKTHILILATTRSGSSFVGQLFNQHLDVFYLFEPLYHVQNTLIPRFTQGKSPADRRVMLGASRDLLRSLYDCDLYFLENYIKPPPVNHTTDRIFRRGASRVLCSRPVCDPPGPADLVLEEGDCVRKCGLLNLTVAAEACRERSHVAIKTVRVPEVNDLRALVEDPRLNLKVIQLVRDPRGILASRSETFRDTYRLWRLWYGTGRKPYNLDVTQLTTVCEDFSNSVSTGLMRPPWLKGKYMLVRYEDLARNPMKKTEEIYGFLGIPLDSHVARWIQNNTRGDPTLGKHKYGTVRNSAATAEKWRFRLSYDIVAFAQNACQQVLAQLGYKIAASEEELKNPSVSLVEERDFRPFS.

Residues 1 to 2 lie on the Cytoplasmic side of the membrane; that stretch reads MQ. Residues 3-23 form a helical; Signal-anchor for type II membrane protein membrane-spanning segment; the sequence is CSWKAVLLLALASIAIQYTAI. Residues 24–411 lie on the Lumenal side of the membrane; it reads RTFTAKSFHT…VEERDFRPFS (388 aa). N-linked (GlcNAc...) asparagine glycosylation is present at Asn56. 69-75 contributes to the 3'-phosphoadenylyl sulfate binding site; that stretch reads TRSGSSF. Asn145 and Asn189 each carry an N-linked (GlcNAc...) asparagine glycan. Residue 234 to 242 coordinates 3'-phosphoadenylyl sulfate; sequence RDPRGILAS. An N-linked (GlcNAc...) asparagine glycan is attached at Asn334. Positions 337–339 match the Cell attachment site motif; the sequence is RGD.

The protein belongs to the sulfotransferase 1 family. Gal/GlcNAc/GalNAc subfamily. Widely expressed at low level. Expressed in brain and skeletal muscle. Expressed by high endothelial cells (HEVs) and leukocytes.

It localises to the golgi apparatus membrane. The enzyme catalyses 3'-phosphoadenylyl sulfate + keratan = adenosine 3',5'-bisphosphate + keratan 6'-sulfate.. It functions in the pathway glycan metabolism. Sulfotransferase that utilizes 3'-phospho-5'-adenylyl sulfate (PAPS) as sulfonate donor to catalyze the transfer of sulfate to position 6 of internal galactose (Gal) residues of keratan. Cooperates with B4GALT4 and B3GNT7 glycosyltransferases and CHST6 sulfotransferase to construct and elongate disulfated disaccharide unit [-&gt;3(6-sulfoGalbeta)1-&gt;4(6-sulfoGlcNAcbeta)1-&gt;] within keratan sulfate polymer. Has a preference for sulfating keratan sulfate, but it also transfers sulfate to the unsulfated polymer. Involved in biosynthesis of phosphacan, a major keratan sulfate proteoglycan in the developing brain. Involved in biosynthesis of 6-sulfoGalbeta-containing O-linked glycans in high endothelial venules of lymph nodes. May act in a synergistic manner with CHST4 to generate sialyl 6',6-disulfo Lewis X motif, a recognition determinant for immune cell receptors implicated in leukocyte trafficking. Catalyzes sulfation of N-acetyllactosamine (LacNAc) oligosaccharides with highest efficiency for sialylated LacNAc structures. The polypeptide is Carbohydrate sulfotransferase 1 (Homo sapiens (Human)).